The chain runs to 97 residues: Co-chaperonin GroES (97 aa).

The protein belongs to the GroES chaperonin family. In terms of assembly, heptamer of 7 subunits arranged in a ring. Interacts with the chaperonin GroEL.

The protein resides in the cytoplasm. Together with the chaperonin GroEL, plays an essential role in assisting protein folding. The GroEL-GroES system forms a nano-cage that allows encapsulation of the non-native substrate proteins and provides a physical environment optimized to promote and accelerate protein folding. GroES binds to the apical surface of the GroEL ring, thereby capping the opening of the GroEL channel. This Nocardioides sp. (strain ATCC BAA-499 / JS614) protein is Co-chaperonin GroES.